The chain runs to 129 residues: L-ectoine synthase (129 aa).

The protein belongs to the ectoine synthase family.

The catalysed reaction is (2S)-4-acetamido-2-aminobutanoate = L-ectoine + H2O. It functions in the pathway amine and polyamine biosynthesis; ectoine biosynthesis; L-ectoine from L-aspartate 4-semialdehyde: step 3/3. Functionally, catalyzes the circularization of gamma-N-acetyl-alpha,gamma-diaminobutyric acid (ADABA) to ectoine (1,4,5,6-tetrahydro-2-methyl-4-pyrimidine carboxylic acid), which is an excellent osmoprotectant. The sequence is that of L-ectoine synthase from Desulfosudis oleivorans (strain DSM 6200 / JCM 39069 / Hxd3) (Desulfococcus oleovorans).